A 352-amino-acid chain; its full sequence is DNA polymerase IV (352 aa).

The UmuC domain occupies 4 to 185 (IIHVDMDCFY…LPLEKIPGVG (182 aa)). Asp-8 and Asp-103 together coordinate Mg(2+). The active site involves Glu-104.

Belongs to the DNA polymerase type-Y family. As to quaternary structure, monomer. The cofactor is Mg(2+).

It localises to the cytoplasm. It carries out the reaction DNA(n) + a 2'-deoxyribonucleoside 5'-triphosphate = DNA(n+1) + diphosphate. Its function is as follows. Poorly processive, error-prone DNA polymerase involved in untargeted mutagenesis. Copies undamaged DNA at stalled replication forks, which arise in vivo from mismatched or misaligned primer ends. These misaligned primers can be extended by PolIV. Exhibits no 3'-5' exonuclease (proofreading) activity. May be involved in translesional synthesis, in conjunction with the beta clamp from PolIII. This Pectobacterium atrosepticum (strain SCRI 1043 / ATCC BAA-672) (Erwinia carotovora subsp. atroseptica) protein is DNA polymerase IV.